A 403-amino-acid chain; its full sequence is 4-hydroxy-3-methylbut-2-en-1-yl diphosphate synthase (ferredoxin) (403 aa).

Residues cysteine 312, cysteine 315, cysteine 346, and glutamate 353 each contribute to the [4Fe-4S] cluster site.

It belongs to the IspG family. [4Fe-4S] cluster serves as cofactor.

The enzyme catalyses (2E)-4-hydroxy-3-methylbut-2-enyl diphosphate + 2 oxidized [2Fe-2S]-[ferredoxin] + H2O = 2-C-methyl-D-erythritol 2,4-cyclic diphosphate + 2 reduced [2Fe-2S]-[ferredoxin] + H(+). It participates in isoprenoid biosynthesis; isopentenyl diphosphate biosynthesis via DXP pathway; isopentenyl diphosphate from 1-deoxy-D-xylulose 5-phosphate: step 5/6. Its function is as follows. Converts 2C-methyl-D-erythritol 2,4-cyclodiphosphate (ME-2,4cPP) into 1-hydroxy-2-methyl-2-(E)-butenyl 4-diphosphate. This chain is 4-hydroxy-3-methylbut-2-en-1-yl diphosphate synthase (ferredoxin), found in Synechocystis sp. (strain ATCC 27184 / PCC 6803 / Kazusa).